We begin with the raw amino-acid sequence, 371 residues long: Beta-1,3-galactosyltransferase 4 (371 aa).

Residues 1–4 (MPLS) are Cytoplasmic-facing. A helical; Signal-anchor for type II membrane protein transmembrane segment spans residues 5 to 25 (LFRRLLLAVLLLVIIWTLFGP). Topologically, residues 26–371 (SGLGEELLSL…RCRFIAWLNS (346 aa)) are lumenal. The N-linked (GlcNAc...) asparagine glycan is linked to Asn-143. The segment at 187–208 (GGPSEQWQKGKEPQEETTAVHK) is disordered. Over residues 194–207 (QKGKEPQEETTAVH) the composition is skewed to basic and acidic residues.

Belongs to the glycosyltransferase 31 family. In terms of tissue distribution, highly expressed in thymus, spleen, kidney and testis and, to a lesser extent, in brain and liver.

Its subcellular location is the golgi apparatus membrane. The catalysed reaction is a ganglioside GM2 (d18:1(4E)) + UDP-alpha-D-galactose = a ganglioside GM1 (d18:1(4E)) + UDP + H(+). It carries out the reaction a ganglioside GM2 + UDP-alpha-D-galactose = a ganglioside GM1 + UDP + H(+). It catalyses the reaction a ganglioside GD2 (d18:1(4E)) + UDP-alpha-D-galactose = a ganglioside GD1b (d18:1(4E)) + UDP + H(+). The enzyme catalyses a ganglioside GA2 (d18:1(4E)) + UDP-alpha-D-galactose = a ganglioside GA1 (d18:1(4E)) + UDP + H(+). It functions in the pathway protein modification; protein glycosylation. Its function is as follows. Involved in GM1/GD1B/GA1 ganglioside biosynthesis. This chain is Beta-1,3-galactosyltransferase 4 (B3galt4), found in Rattus norvegicus (Rat).